Here is an 863-residue protein sequence, read N- to C-terminus: Protein translocase subunit SecA (863 aa).

ATP-binding positions include Gln-88, 106–110 (GEGKT), and Asp-496. Residues 818-842 (EVKTEPVITKKKPARNEPCPCGSGK) form a disordered region. Zn(2+)-binding residues include Cys-836, Cys-838, Cys-847, and Cys-848.

It belongs to the SecA family. In terms of assembly, monomer and homodimer. Part of the essential Sec protein translocation apparatus which comprises SecA, SecYEG and auxiliary proteins SecDF-YajC and YidC. Zn(2+) is required as a cofactor.

The protein resides in the cell inner membrane. The protein localises to the cytoplasm. The catalysed reaction is ATP + H2O + cellular proteinSide 1 = ADP + phosphate + cellular proteinSide 2.. In terms of biological role, part of the Sec protein translocase complex. Interacts with the SecYEG preprotein conducting channel. Has a central role in coupling the hydrolysis of ATP to the transfer of proteins into and across the cell membrane, serving as an ATP-driven molecular motor driving the stepwise translocation of polypeptide chains across the membrane. The polypeptide is Protein translocase subunit SecA (Nitratiruptor sp. (strain SB155-2)).